The chain runs to 1108 residues: DNA-directed RNA polymerase subunit beta (1108 aa).

The interval Ser1081–Phe1108 is disordered.

It belongs to the RNA polymerase beta chain family. In cyanobacteria the RNAP catalytic core is composed of 2 alpha, 1 beta, 1 beta', 1 gamma and 1 omega subunit. When a sigma factor is associated with the core the holoenzyme is formed, which can initiate transcription.

It carries out the reaction RNA(n) + a ribonucleoside 5'-triphosphate = RNA(n+1) + diphosphate. In terms of biological role, DNA-dependent RNA polymerase catalyzes the transcription of DNA into RNA using the four ribonucleoside triphosphates as substrates. The sequence is that of DNA-directed RNA polymerase subunit beta from Thermosynechococcus vestitus (strain NIES-2133 / IAM M-273 / BP-1).